Reading from the N-terminus, the 1744-residue chain is Tensin-1 (1744 aa).

Positions 15–55 (SPAVNYELPSPGQSITKQVDTPDATRSPRGGQAHRKASRSM) are disordered. The 173-residue stretch at 58 to 230 (TAAMESSCEL…HYFSGLLSGS (173 aa)) folds into the Phosphatase tensin-type domain. The C2 tensin-type domain maps to 235-361 (NKPLFLHHVI…GKVEFVFSYG (127 aa)). 7 disordered regions span residues 467–505 (TLSVSSDSGNSTASTKTDRTDEPGAPGAPTGHAVLSPEE), 569–589 (DELPNQDGHSVGSLGTLSSLD), 666–686 (AQEHLAGYPQRQPASTSPAWL), 724–797 (PQAP…APSR), 934–956 (GSQQLLVSSPPSPTAPAQSQLPH), 982–1077 (RVAG…PGLA), and 1156–1437 (VPSP…GSAV). Residues 468-481 (LSVSSDSGNSTAST) show a composition bias toward polar residues. Over residues 580 to 589 (GSLGTLSSLD) the composition is skewed to low complexity. The span at 728–753 (ARSTSSREAVQRGLNSWQQQGGSRPP) shows a compositional bias: polar residues. Positions 763–773 (SHSPSLSSCSP) are enriched in low complexity. Over residues 774 to 783 (QPSPLQPMPP) the composition is skewed to pro residues. 2 stretches are compositionally biased toward basic and acidic residues: residues 1004-1014 (TPSDSHYEKSS) and 1041-1054 (RPKEPHLHSYKEAF). The span at 1060–1069 (ASPSSLTSGG) shows a compositional bias: polar residues. Low complexity-rich tracts occupy residues 1156–1169 (VPSPVSTSSPIHSV) and 1208–1220 (SAHSSYQTSSPSS). Polar residues-rich tracts occupy residues 1344–1355 (LSRQSSASGYQP), 1370–1380 (GTSTPHSSSPD), and 1405–1420 (ERSNSLPNYATVNGKA). Positions 1421 to 1435 (SSPLSSGMSSPSSGS) are enriched in low complexity. The SH2 domain occupies 1472–1581 (WYKPDISREQ…ALPCKLVIPD (110 aa)). The PTB domain occupies 1607–1743 (ACNVLFINSV…SRVMLGSGQK (137 aa)).

It belongs to the PTEN phosphatase protein family. In terms of assembly, binds to actin filaments. Interacts with phosphotyrosine-containing proteins. Tyrosine phosphorylated. Heart, gizzard, lung and skeletal muscle.

The protein localises to the cell surface. Its subcellular location is the cell junction. It localises to the focal adhesion. It is found in the cytoplasm. The protein resides in the cytoskeleton. In terms of biological role, may act as a protein phosphatase and/or a lipid phosphatase. Involved in fibrillar adhesion formation. Plays a role in cell polarization and migration. May be involved in cartilage development and in linking signal transduction pathways to the cytoskeleton. The protein is Tensin-1 (TNS1) of Gallus gallus (Chicken).